The chain runs to 785 residues: Protein PHTF2 (785 aa).

In terms of domain architecture, PHTF spans 46-191 (IQCLIGAYDQ…VHCQIVSTRT (146 aa)). Helical transmembrane passes span 136–156 (VIFFWLLVLYLLQVAAIVLFC) and 164–184 (IPLTEVIGPIWLMLLLGTVHC). Disordered stretches follow at residues 190–239 (RTPK…GTST) and 304–401 (RPEE…PESE). Residues 200-209 (GKRRRKLRKA) are compositionally biased toward basic residues. Residues 210–219 (AHLEVHREGD) show a composition bias toward basic and acidic residues. 2 stretches are compositionally biased toward polar residues: residues 220-239 (GSSTTDNTQEGAVQNHGTST) and 309-333 (AWNTGTLRNGPSKDTQRTITNVSDE). N-linked (GlcNAc...) asparagine glycosylation occurs at N329. The segment covering 359–369 (RNRKSHHYKKH) has biased composition (basic residues). Low complexity predominate over residues 378 to 390 (SGTSCSSRCSSSR). Residues 391 to 400 (QDSESARPES) show a composition bias toward basic and acidic residues. 4 helical membrane-spanning segments follow: residues 497–517 (IGYQIFGNAVSLILGLTPFVF), 553–573 (VIISFVVRVSLVWIFFFLLCV), 634–654 (VIVSSAFLLTISVVFICCAQL), and 668–688 (WELVIWCISLTLFLLRFVTLG). N697 and N756 each carry an N-linked (GlcNAc...) asparagine glycan. A helical membrane pass occupies residues 760–780 (VVILSAVSGVISDLLGFNLKL).

It is found in the membrane. This is Protein PHTF2 (PHTF2) from Homo sapiens (Human).